The sequence spans 263 residues: Endonuclease 8 (263 aa).

Pro-2 (schiff-base intermediate with DNA) is an active-site residue. The active-site Proton donor is the Glu-3. The active-site Proton donor; for beta-elimination activity is Lys-53. DNA is bound by residues Gln-70, Arg-125, and Asn-169. The segment at 229-263 (KVFHRDGEACERCGGIIEKTTLSSRPFYWCAHCQK) adopts an FPG-type zinc-finger fold. The active-site Proton donor; for delta-elimination activity is Arg-253.

It belongs to the FPG family. It depends on Zn(2+) as a cofactor.

The catalysed reaction is 2'-deoxyribonucleotide-(2'-deoxyribose 5'-phosphate)-2'-deoxyribonucleotide-DNA = a 3'-end 2'-deoxyribonucleotide-(2,3-dehydro-2,3-deoxyribose 5'-phosphate)-DNA + a 5'-end 5'-phospho-2'-deoxyribonucleoside-DNA + H(+). Involved in base excision repair of DNA damaged by oxidation or by mutagenic agents. Acts as a DNA glycosylase that recognizes and removes damaged bases. Has a preference for oxidized pyrimidines, such as thymine glycol, 5,6-dihydrouracil and 5,6-dihydrothymine. Has AP (apurinic/apyrimidinic) lyase activity and introduces nicks in the DNA strand. Cleaves the DNA backbone by beta-delta elimination to generate a single-strand break at the site of the removed base with both 3'- and 5'-phosphates. The sequence is that of Endonuclease 8 from Salmonella typhi.